The following is a 559-amino-acid chain: MAAPVLLLKEGTSRTTGRDALRNNILAAKTLAEMLRSSLGPKGLDKMLIDSFGDVTITNDGATIVKDMEIQHPAAKLLVEAAKAQDAEVGDGTTSAVVLAGALLEKAESLLDQNIHPTIIIEGYKKAYNKALELLPQLGTRIDIKDLNSSVARDTLRKIAFTTLASKFIAEGAELNKIIDMVIDAIVNVAEPLPNGGYNVSLDLIKIDKKKGGSIEDSVLVKGLVLDKEVVHPGMPRRVTKAKIAVLDAALEVEKPEISAKISITSPEQIKAFLDEESKYLKDMVDKLASIGANVVICQKGIDDIAQHFLAKKGILAVRRVKRSDIEKLEKALGARIISSIKDATPEDLGYAELVEERRVGNDKMVFIEGAKNLKAVNILLRGSNDMALDEAERSINDALHALRNILLEPVILPGGGAIELELAMKLREYARSVGGKEQLAIEAFADALEEIPLILAETAGLEAISSLMDLRARHAKGLSNTGVDVIGGKIVDDVYALNIIEPIRVKSQVLKSATEAATAILKIDDLIAAAPLKSEKKGGEGSKEESGGEGGSTPSLGD.

Residues 535–547 show a composition bias toward basic and acidic residues; that stretch reads SEKKGGEGSKEES. The disordered stretch occupies residues 535 to 559; it reads SEKKGGEGSKEESGGEGGSTPSLGD.

It belongs to the TCP-1 chaperonin family. Forms a Heterooligomeric complex of two stacked eight-membered rings.

Functionally, molecular chaperone; binds unfolded polypeptides in vitro, and has a weak ATPase activity. In Saccharolobus solfataricus (strain ATCC 35092 / DSM 1617 / JCM 11322 / P2) (Sulfolobus solfataricus), this protein is Thermosome subunit alpha (thsA).